A 252-amino-acid chain; its full sequence is Diphthine synthase (252 aa).

S-adenosyl-L-methionine-binding positions include Leu9, Asp85, Val88, 113-114 (SI), Leu165, Ala202, and His227.

This sequence belongs to the diphthine synthase family. In terms of assembly, homodimer.

It carries out the reaction 2-[(3S)-amino-3-carboxypropyl]-L-histidyl-[translation elongation factor 2] + 3 S-adenosyl-L-methionine = diphthine-[translation elongation factor 2] + 3 S-adenosyl-L-homocysteine + 3 H(+). The protein operates within protein modification; peptidyl-diphthamide biosynthesis. In terms of biological role, S-adenosyl-L-methionine-dependent methyltransferase that catalyzes the trimethylation of the amino group of the modified target histidine residue in translation elongation factor 2 (EF-2), to form an intermediate called diphthine. The three successive methylation reactions represent the second step of diphthamide biosynthesis. In Methanospirillum hungatei JF-1 (strain ATCC 27890 / DSM 864 / NBRC 100397 / JF-1), this protein is Diphthine synthase.